Reading from the N-terminus, the 175-residue chain is Protein FMP23, mitochondrial (175 aa).

Residues 1–38 (MLINHLSKIRTVRHFSNIKPVLSKEVSRRVIVAPASHF) constitute a mitochondrion transit peptide.

Its subcellular location is the mitochondrion. Its function is as follows. May be involved in mitochondrial iron or copper homeostatis. This is Protein FMP23, mitochondrial (FMP23) from Saccharomyces cerevisiae (strain ATCC 204508 / S288c) (Baker's yeast).